A 789-amino-acid polypeptide reads, in one-letter code: E3 UFM1-protein ligase 1 (789 aa).

The tract at residues 2-212 (AADWEEIRRL…VSNLITRYGF (211 aa)) is required for E3 UFM1-protein ligase activity. Disordered regions lie at residues 407 to 470 (LENS…TGRN) and 743 to 763 (SKKA…ADTI). The span at 444–453 (KIKKTKKKGR) shows a compositional bias: basic residues. Residues 748–760 (QEDDNKTEEEEGA) are compositionally biased toward acidic residues.

It belongs to the UFL1 family. Catalytic component of the UFM1 ribosome E3 ligase (UREL) complex. Interacts with E2-like enzyme UFC1.

The protein localises to the endoplasmic reticulum membrane. It localises to the cytoplasm. The protein resides in the cytosol. Its subcellular location is the nucleus. It is found in the chromosome. Functionally, E3 protein ligase that mediates ufmylation, the covalent attachment of the ubiquitin-like modifier UFM1 to lysine residues on target proteins, and which plays a key role in various processes, such as ribosome recycling, response to DNA damage, interferon response or reticulophagy (also called ER-phagy). As part of the UREL complex, plays a key role in ribosome recycling by catalyzing mono-ufmylation of RPL26/uL24 subunit of the 60S ribosome. Ufmylation of RPL26/uL24 occurs on free 60S ribosomes following ribosome dissociation: it weakens the junction between post-termination 60S subunits and SEC61 translocons, promoting release and recycling of the large ribosomal subunit from the endoplasmic reticulum membrane. Ufmylation of RPL26/uL24 and subsequent 60S ribosome recycling either take place after normal termination of translation or after ribosome stalling during cotranslational translocation at the endoplasmic reticulum. Involved in reticulophagy in response to endoplasmic reticulum stress by mediating ufmylation of proteins such as CYB5R3 and RPN1, thereby promoting lysosomal degradation of ufmylated proteins. Ufmylation in response to endoplasmic reticulum stress is essential for processes such as hematopoiesis, blood vessel morphogenesis or inflammatory response. The sequence is that of E3 UFM1-protein ligase 1 from Gallus gallus (Chicken).